Reading from the N-terminus, the 306-residue chain is Glutathione transport system permease protein GsiC (306 aa).

The Cytoplasmic segment spans residues 1–8 (MLNYVLKR). A helical transmembrane segment spans residues 9–29 (LLGLIPTLLIVAVLVFLFVHL). Topologically, residues 30–102 (LPGDPARLIA…SRFLPTLWLT (73 aa)) are periplasmic. Residues 95–292 (FLPTLWLTIT…LEFILINLVV (198 aa)) form the ABC transmembrane type-1 domain. A helical transmembrane segment spans residues 103–123 (ITSMIWAVLFGMAIGIAAAVW). Residues 124–134 (RNRWPDRLGMT) lie on the Cytoplasmic side of the membrane. The chain crosses the membrane as a helical span at residues 135-155 (LAVTGISFPAFALGMLLMQIF). At 156–168 (SVDLGWLPTVGAD) the chain is on the periplasmic side. A helical membrane pass occupies residues 169-189 (SWQHYILPSLTLGAAVASVMA). Residues 190-228 (RFTRSSFVDVLSEDYMRTARAKGVSETWVVLKHGLRNAM) lie on the Cytoplasmic side of the membrane. Residues 229 to 249 (IPVVTMMGLQFGFLLGGSIVV) form a helical membrane-spanning segment. The Periplasmic portion of the chain corresponds to 250-278 (EKVFNWPGLGRLLVDSVDMRDYPVIQAEV). The chain crosses the membrane as a helical span at residues 279 to 299 (LLFSLEFILINLVVDVLYAAI). Topologically, residues 300–306 (NPAIRYK) are cytoplasmic.

It belongs to the binding-protein-dependent transport system permease family. The complex is composed of two ATP-binding proteins (GsiA), two transmembrane proteins (GsiC and GsiD) and a solute-binding protein (GsiB).

It is found in the cell inner membrane. Functionally, part of the ABC transporter complex GsiABCD involved in glutathione import. Probably responsible for the translocation of the substrate across the membrane. The polypeptide is Glutathione transport system permease protein GsiC (Salmonella typhimurium (strain LT2 / SGSC1412 / ATCC 700720)).